The primary structure comprises 301 residues: Oxygen-dependent coproporphyrinogen-III oxidase (301 aa).

Residue serine 94 coordinates substrate. Histidine 98 and histidine 108 together coordinate a divalent metal cation. The active-site Proton donor is the histidine 108. Position 110-112 (110-112 (NVR)) interacts with substrate. A divalent metal cation is bound by residues histidine 147 and histidine 177. Residues 242–277 (YVEFNLVYDRGTLFGLQSGGRTESILMSMPPLARWE) form an important for dimerization region. 260–262 (GGR) serves as a coordination point for substrate.

The protein belongs to the aerobic coproporphyrinogen-III oxidase family. Homodimer. A divalent metal cation is required as a cofactor.

Its subcellular location is the cytoplasm. It carries out the reaction coproporphyrinogen III + O2 + 2 H(+) = protoporphyrinogen IX + 2 CO2 + 2 H2O. It functions in the pathway porphyrin-containing compound metabolism; protoporphyrin-IX biosynthesis; protoporphyrinogen-IX from coproporphyrinogen-III (O2 route): step 1/1. Functionally, involved in the heme biosynthesis. Catalyzes the aerobic oxidative decarboxylation of propionate groups of rings A and B of coproporphyrinogen-III to yield the vinyl groups in protoporphyrinogen-IX. This chain is Oxygen-dependent coproporphyrinogen-III oxidase, found in Photobacterium profundum (strain SS9).